The following is a 378-amino-acid chain: Ribosomal RNA large subunit methyltransferase G (378 aa).

Belongs to the methyltransferase superfamily. RlmG family.

The protein resides in the cytoplasm. The enzyme catalyses guanosine(1835) in 23S rRNA + S-adenosyl-L-methionine = N(2)-methylguanosine(1835) in 23S rRNA + S-adenosyl-L-homocysteine + H(+). Functionally, specifically methylates the guanine in position 1835 (m2G1835) of 23S rRNA. The sequence is that of Ribosomal RNA large subunit methyltransferase G from Shewanella baltica (strain OS195).